The chain runs to 660 residues: Bifunctional polymyxin resistance protein ArnA (660 aa).

The tract at residues 1-304 is formyltransferase ArnAFT; the sequence is MKAVIFAYHD…TLGLVAGARL (304 aa). The active-site Proton donor; for formyltransferase activity is the H104. Residues R114 and 136–140 each bind (6R)-10-formyltetrahydrofolate; that span reads VKRAD. The segment at 314–660 is dehydrogenase ArnADH; that stretch reads RRIRVLILGV…RSVDVAERAS (347 aa). NAD(+) contacts are provided by residues D347 and 368–369; that span reads DI. Residues A393, Y398, and 432 to 433 each bind UDP-alpha-D-glucuronate; that span reads TS. E434 (proton acceptor; for decarboxylase activity) is an active-site residue. UDP-alpha-D-glucuronate is bound by residues R460, N492, 526-535, and Y613; that span reads KLIDGGQQKR. The active-site Proton donor; for decarboxylase activity is R619.

The protein in the N-terminal section; belongs to the Fmt family. UDP-L-Ara4N formyltransferase subfamily. In the C-terminal section; belongs to the NAD(P)-dependent epimerase/dehydratase family. UDP-glucuronic acid decarboxylase subfamily. In terms of assembly, homohexamer, formed by a dimer of trimers.

The catalysed reaction is UDP-alpha-D-glucuronate + NAD(+) = UDP-beta-L-threo-pentopyranos-4-ulose + CO2 + NADH. It catalyses the reaction UDP-4-amino-4-deoxy-beta-L-arabinose + (6R)-10-formyltetrahydrofolate = UDP-4-deoxy-4-formamido-beta-L-arabinose + (6S)-5,6,7,8-tetrahydrofolate + H(+). The protein operates within nucleotide-sugar biosynthesis; UDP-4-deoxy-4-formamido-beta-L-arabinose biosynthesis; UDP-4-deoxy-4-formamido-beta-L-arabinose from UDP-alpha-D-glucuronate: step 1/3. It participates in nucleotide-sugar biosynthesis; UDP-4-deoxy-4-formamido-beta-L-arabinose biosynthesis; UDP-4-deoxy-4-formamido-beta-L-arabinose from UDP-alpha-D-glucuronate: step 3/3. It functions in the pathway bacterial outer membrane biogenesis; lipopolysaccharide biosynthesis. Functionally, bifunctional enzyme that catalyzes the oxidative decarboxylation of UDP-glucuronic acid (UDP-GlcUA) to UDP-4-keto-arabinose (UDP-Ara4O) and the addition of a formyl group to UDP-4-amino-4-deoxy-L-arabinose (UDP-L-Ara4N) to form UDP-L-4-formamido-arabinose (UDP-L-Ara4FN). The modified arabinose is attached to lipid A and is required for resistance to polymyxin and cationic antimicrobial peptides. The sequence is that of Bifunctional polymyxin resistance protein ArnA from Salmonella dublin (strain CT_02021853).